The chain runs to 192 residues: Pyridoxal 5'-phosphate synthase subunit PdxT (192 aa).

Residue 46–48 (GES) coordinates L-glutamine. Cysteine 78 serves as the catalytic Nucleophile. L-glutamine is bound by residues arginine 106 and 135 to 136 (IR). Catalysis depends on charge relay system residues histidine 171 and glutamate 173.

The protein belongs to the glutaminase PdxT/SNO family. In terms of assembly, in the presence of PdxS, forms a dodecamer of heterodimers. Only shows activity in the heterodimer.

The enzyme catalyses aldehydo-D-ribose 5-phosphate + D-glyceraldehyde 3-phosphate + L-glutamine = pyridoxal 5'-phosphate + L-glutamate + phosphate + 3 H2O + H(+). The catalysed reaction is L-glutamine + H2O = L-glutamate + NH4(+). It functions in the pathway cofactor biosynthesis; pyridoxal 5'-phosphate biosynthesis. Its function is as follows. Catalyzes the hydrolysis of glutamine to glutamate and ammonia as part of the biosynthesis of pyridoxal 5'-phosphate. The resulting ammonia molecule is channeled to the active site of PdxS. The protein is Pyridoxal 5'-phosphate synthase subunit PdxT of Kosmotoga olearia (strain ATCC BAA-1733 / DSM 21960 / TBF 19.5.1).